Reading from the N-terminus, the 362-residue chain is Serine/threonine-protein kinase SBK2 (362 aa).

The segment covering 1-11 (MPGKQSEDKPM) has biased composition (basic and acidic residues). The tract at residues 1–26 (MPGKQSEDKPMEVSTVEDGGDEGLGG) is disordered. The Protein kinase domain maps to 62–330 (YEEVRPLGQG…IKSYLGQPWK (269 aa)). Residues 68-76 (LGQGRFGRV) and K91 contribute to the ATP site. Catalysis depends on D183, which acts as the Proton acceptor. Residues 329 to 362 (WKQREGEAEELATELREDGWRGGQEAAKGEQPAC) form a disordered region.

The protein belongs to the protein kinase superfamily. Ser/Thr protein kinase family. STKL subfamily.

The enzyme catalyses L-seryl-[protein] + ATP = O-phospho-L-seryl-[protein] + ADP + H(+). The catalysed reaction is L-threonyl-[protein] + ATP = O-phospho-L-threonyl-[protein] + ADP + H(+). This Mus musculus (Mouse) protein is Serine/threonine-protein kinase SBK2 (Sbk2).